We begin with the raw amino-acid sequence, 345 residues long: Leucine-rich repeat-containing protein 69 (345 aa).

LRR repeat units follow at residues 13–34 (KAKT…VGCL), 36–58 (SLTE…SALC), 59–80 (RLRV…IKYL), 82–103 (CLER…ALDG), 106–127 (NLLF…IYKL), 129–151 (SLET…CFLQ), 152–173 (NLQE…LSYL), 175–196 (NLKE…ICKL), 198–219 (KLKI…MHRV), and 220–241 (PLTE…FARQ).

The protein belongs to the LRRC69 family.

This is Leucine-rich repeat-containing protein 69 (lrrc69) from Xenopus laevis (African clawed frog).